We begin with the raw amino-acid sequence, 212 residues long: Peptide methionine sulfoxide reductase MsrA (212 aa).

The active site involves Cys-52.

The protein belongs to the MsrA Met sulfoxide reductase family.

The enzyme catalyses L-methionyl-[protein] + [thioredoxin]-disulfide + H2O = L-methionyl-(S)-S-oxide-[protein] + [thioredoxin]-dithiol. It catalyses the reaction [thioredoxin]-disulfide + L-methionine + H2O = L-methionine (S)-S-oxide + [thioredoxin]-dithiol. Functionally, has an important function as a repair enzyme for proteins that have been inactivated by oxidation. Catalyzes the reversible oxidation-reduction of methionine sulfoxide in proteins to methionine. The protein is Peptide methionine sulfoxide reductase MsrA of Salmonella choleraesuis (strain SC-B67).